Reading from the N-terminus, the 185-residue chain is Elongation factor P (185 aa).

The protein belongs to the elongation factor P family.

Its subcellular location is the cytoplasm. Its pathway is protein biosynthesis; polypeptide chain elongation. Involved in peptide bond synthesis. Stimulates efficient translation and peptide-bond synthesis on native or reconstituted 70S ribosomes in vitro. Probably functions indirectly by altering the affinity of the ribosome for aminoacyl-tRNA, thus increasing their reactivity as acceptors for peptidyl transferase. In Caldicellulosiruptor bescii (strain ATCC BAA-1888 / DSM 6725 / KCTC 15123 / Z-1320) (Anaerocellum thermophilum), this protein is Elongation factor P.